We begin with the raw amino-acid sequence, 151 residues long: uncharacterized protein (151 aa).

[4Fe-4S] cluster-binding residues include C24, C27, C92, and C129.

The protein belongs to the complex I 20 kDa subunit family. [4Fe-4S] cluster is required as a cofactor.

This is an uncharacterized protein from Methanocaldococcus jannaschii (strain ATCC 43067 / DSM 2661 / JAL-1 / JCM 10045 / NBRC 100440) (Methanococcus jannaschii).